An 89-amino-acid chain; its full sequence is UPF0213 protein LSEI_1587 (89 aa).

The region spanning 4 to 79 (KTYYFYVLLC…KHQTRHRKEV (76 aa)) is the GIY-YIG domain.

This sequence belongs to the UPF0213 family.

The chain is UPF0213 protein LSEI_1587 from Lacticaseibacillus paracasei (strain ATCC 334 / BCRC 17002 / CCUG 31169 / CIP 107868 / KCTC 3260 / NRRL B-441) (Lactobacillus paracasei).